Consider the following 193-residue polypeptide: Holliday junction branch migration complex subunit RuvA (193 aa).

Positions 1–64 (MIGRIAGTLI…EDAHLLYGFG (64 aa)) are domain I. Residues 65–143 (TAAERETFRQ…ADLGTVPGGP (79 aa)) are domain II. Positions 144 to 151 (AVSDDAVD) are flexible linker. The domain III stretch occupies residues 151 to 193 (DVLNALLALGYSDKEAALAIKQVPAGTGVSEGIKLALKALSKG).

Belongs to the RuvA family. As to quaternary structure, homotetramer. Forms an RuvA(8)-RuvB(12)-Holliday junction (HJ) complex. HJ DNA is sandwiched between 2 RuvA tetramers; dsDNA enters through RuvA and exits via RuvB. An RuvB hexamer assembles on each DNA strand where it exits the tetramer. Each RuvB hexamer is contacted by two RuvA subunits (via domain III) on 2 adjacent RuvB subunits; this complex drives branch migration. In the full resolvosome a probable DNA-RuvA(4)-RuvB(12)-RuvC(2) complex forms which resolves the HJ.

Its subcellular location is the cytoplasm. The RuvA-RuvB-RuvC complex processes Holliday junction (HJ) DNA during genetic recombination and DNA repair, while the RuvA-RuvB complex plays an important role in the rescue of blocked DNA replication forks via replication fork reversal (RFR). RuvA specifically binds to HJ cruciform DNA, conferring on it an open structure. The RuvB hexamer acts as an ATP-dependent pump, pulling dsDNA into and through the RuvAB complex. HJ branch migration allows RuvC to scan DNA until it finds its consensus sequence, where it cleaves and resolves the cruciform DNA. The protein is Holliday junction branch migration complex subunit RuvA of Ralstonia pickettii (strain 12J).